The sequence spans 520 residues: Glucose starvation modulator protein 1 (520 aa).

Residues 20-48 (CSFCHSKHLQCSNNRPCKNCVKRNIADQC) constitute a DNA-binding region (zn(2)-C6 fungal-type). 2 disordered regions span residues 63 to 104 (AKNK…SSGR) and 194 to 213 (PASP…PNEM). Residues 74 to 85 (SLESSSSPFSPL) show a composition bias toward low complexity. Polar residues predominate over residues 90 to 104 (INSQSSQPLDPSSGR). Residues 376 to 445 (DYEKLSHLNS…FKLFKSVAVG (70 aa)) enclose the PAS domain.

Belongs to the ERT1/acuK family.

Its subcellular location is the nucleus. In terms of biological role, transcription factor which regulates nonfermentable carbon utilization. This Meyerozyma guilliermondii (strain ATCC 6260 / CBS 566 / DSM 6381 / JCM 1539 / NBRC 10279 / NRRL Y-324) (Yeast) protein is Glucose starvation modulator protein 1 (GSM1).